Here is a 27-residue protein sequence, read N- to C-terminus: C-reactive protein P1 (27 aa).

A disordered region spans residues 1-27 (IPQDLSGKMLTFPKEEDDDDVKLMTPK). A Pentraxin (PTX) domain is found at 6–27 (SGKMLTFPKEEDDDDVKLMTPK).

The protein belongs to the pentraxin family. In terms of assembly, homopentamer. Pentraxin (or pentaxin) have a discoid arrangement of 5 non-covalently bound subunits. Exists as a dimer under reducing conditions. Ca(2+) serves as cofactor. Glycosylated.

The protein resides in the secreted. Functionally, displays several functions associated with host defense: it promotes agglutination, bacterial capsular swelling, phagocytosis, and complement fixation through its calcium-dependent binding to phosphorylcholine. This chain is C-reactive protein P1, found in Gadus morhua (Atlantic cod).